A 453-amino-acid polypeptide reads, in one-letter code: tRNA modification GTPase MnmE (453 aa).

The (6S)-5-formyl-5,6,7,8-tetrahydrofolate site is built by arginine 22, glutamate 79, and lysine 119. The TrmE-type G domain occupies 215 to 376 (GMKVVIAGRP…LKAHLKSLMG (162 aa)). Position 225 (asparagine 225) interacts with K(+). Residues 225 to 230 (NAGKSS), 244 to 250 (TEIAGTT), 269 to 272 (DTAG), and 334 to 337 (NKAD) contribute to the GTP site. Residue serine 229 participates in Mg(2+) binding. Residues threonine 244, isoleucine 246, and threonine 249 each contribute to the K(+) site. Threonine 250 serves as a coordination point for Mg(2+). Residue lysine 453 coordinates (6S)-5-formyl-5,6,7,8-tetrahydrofolate.

It belongs to the TRAFAC class TrmE-Era-EngA-EngB-Septin-like GTPase superfamily. TrmE GTPase family. As to quaternary structure, homodimer. Heterotetramer of two MnmE and two MnmG subunits. It depends on K(+) as a cofactor.

Its subcellular location is the cytoplasm. Exhibits a very high intrinsic GTPase hydrolysis rate. Involved in the addition of a carboxymethylaminomethyl (cmnm) group at the wobble position (U34) of certain tRNAs, forming tRNA-cmnm(5)s(2)U34. This is tRNA modification GTPase MnmE from Shewanella loihica (strain ATCC BAA-1088 / PV-4).